A 501-amino-acid chain; its full sequence is Pyruvate kinase (501 aa).

Residue arginine 50 participates in substrate binding. Residues asparagine 52, serine 54, aspartate 85, and threonine 86 each coordinate K(+). An ATP-binding site is contributed by 52–55; it reads NFSH. Residues arginine 92 and lysine 178 each contribute to the ATP site. Glutamate 243 contributes to the Mg(2+) binding site. Positions 266, 267, and 299 each coordinate substrate. Aspartate 267 serves as a coordination point for Mg(2+).

It belongs to the pyruvate kinase family. In terms of assembly, homotetramer. Mg(2+) serves as cofactor. The cofactor is K(+).

The catalysed reaction is pyruvate + ATP = phosphoenolpyruvate + ADP + H(+). It functions in the pathway carbohydrate degradation; glycolysis; pyruvate from D-glyceraldehyde 3-phosphate: step 5/5. The chain is Pyruvate kinase (PYK1) from Kluyveromyces lactis (strain ATCC 8585 / CBS 2359 / DSM 70799 / NBRC 1267 / NRRL Y-1140 / WM37) (Yeast).